The chain runs to 314 residues: MSVAIIGAGAFGTALAVSLATKGPVTLWGRDTEWADTGENPRLPGVPLPPALRVTDRLDEITAETVLLALPAQVLGGFLAEHGAQFDRRNLVSCAKGIDLATLTGPSALIAAACPQATVAVLTGPSFAADIARGLPTALTLACADAGAAEALQRQLSTATLRLYRTTDVTGAELGGALKNIIAIAAGAAIGAGYGDSARASVVTRGFAEMLRLATALGARPETLPGLSGLGDLVLTCTSEQSRNFRYGLALGSRRPFAAGTTVEGASTARAVTQLAERLGIEMPISNLVAGLAEGRIAMEHALDFLLNRPLKEE.

Residues Phe-11, Arg-30, and Lys-96 each coordinate NADPH. Lys-96, Gly-124, and Ser-126 together coordinate sn-glycerol 3-phosphate. Position 128 (Ala-128) interacts with NADPH. Positions 179, 232, 242, 243, and 244 each coordinate sn-glycerol 3-phosphate. Lys-179 (proton acceptor) is an active-site residue. Arg-243 contributes to the NADPH binding site. Position 264 (Glu-264) interacts with NADPH.

It belongs to the NAD-dependent glycerol-3-phosphate dehydrogenase family.

It is found in the cytoplasm. The catalysed reaction is sn-glycerol 3-phosphate + NAD(+) = dihydroxyacetone phosphate + NADH + H(+). It catalyses the reaction sn-glycerol 3-phosphate + NADP(+) = dihydroxyacetone phosphate + NADPH + H(+). The protein operates within membrane lipid metabolism; glycerophospholipid metabolism. Functionally, catalyzes the reduction of the glycolytic intermediate dihydroxyacetone phosphate (DHAP) to sn-glycerol 3-phosphate (G3P), the key precursor for phospholipid synthesis. The polypeptide is Glycerol-3-phosphate dehydrogenase [NAD(P)+] (Paracoccus denitrificans (strain Pd 1222)).